Consider the following 456-residue polypeptide: Equilibrative nucleoside transporter 2 (456 aa).

The helical transmembrane segment at 13-33 threads the bilayer; that stretch reads LVGISFFILGLGTLLPWNFFI. An N-linked (GlcNAc...) asparagine glycan is attached at Asn-56. 5 helical membrane passes run 69 to 89, 98 to 118, 123 to 143, 161 to 181, and 192 to 212; these read WVTL…SFLY, ILGS…LVKV, GLFF…CAVL, LFLS…LMSL, and LGYF…YLSL. Residues 248–277 are disordered; sequence GVPISPQQASPTLDLDPEKEPEPEEPQKPG. The residue at position 252 (Ser-252) is a Phosphoserine. Basic and acidic residues predominate over residues 263-275; the sequence is DPEKEPEPEEPQK. 5 consecutive transmembrane segments (helical) span residues 288–308, 323–343, 360–380, 396–416, and 432–452; these read IWLT…VFPA, WGLF…DWLG, LLPL…LCHV, FITF…LTMC, and ALMT…SFLF.

Belongs to the SLC29A/ENT transporter (TC 2.A.57) family.

The protein resides in the apical cell membrane. It is found in the basolateral cell membrane. It localises to the nucleus membrane. It carries out the reaction inosine(in) = inosine(out). The catalysed reaction is adenosine(in) = adenosine(out). It catalyses the reaction uridine(out) = uridine(in). The enzyme catalyses thymidine(in) = thymidine(out). It carries out the reaction hypoxanthine(out) = hypoxanthine(in). The catalysed reaction is adenine(out) = adenine(in). It catalyses the reaction cytidine(in) = cytidine(out). The enzyme catalyses thymine(out) = thymine(in). It carries out the reaction uracil(in) = uracil(out). The catalysed reaction is guanine(out) = guanine(in). It catalyses the reaction guanosine(in) = guanosine(out). Functionally, bidirectional uniporter involved in the facilitative transport of nucleosides and nucleobases, and contributes to maintaining their cellular homeostasis. Functions as a Na(+)-independent, passive transporter. Involved in the transport of nucleosides such as inosine, adenosine, uridine, thymidine, cytidine and guanosine. Also able to transport purine nucleobases (hypoxanthine, adenine, guanine) and pyrimidine nucleobases (thymine, uracil). Involved in nucleoside transport at basolateral membrane of kidney cells, allowing liver absorption of nucleoside metabolites. Mediates apical nucleoside uptake into Sertoli cells, thereby regulating the transport of nucleosides in testis across the blood-testis-barrier. Mediates both the influx and efflux of hypoxanthine in skeletal muscle microvascular endothelial cells to control the amount of intracellular hypoxanthine available for xanthine oxidase-mediated ROS production. The protein is Equilibrative nucleoside transporter 2 of Mus musculus (Mouse).